The sequence spans 443 residues: Xaa-Pro dipeptidase (443 aa).

5 residues coordinate Mn(2+): aspartate 246, aspartate 257, histidine 339, glutamate 384, and glutamate 423.

Belongs to the peptidase M24B family. Bacterial-type prolidase subfamily. The cofactor is Mn(2+).

It catalyses the reaction Xaa-L-Pro dipeptide + H2O = an L-alpha-amino acid + L-proline. Functionally, splits dipeptides with a prolyl residue in the C-terminal position. The chain is Xaa-Pro dipeptidase from Erwinia tasmaniensis (strain DSM 17950 / CFBP 7177 / CIP 109463 / NCPPB 4357 / Et1/99).